A 263-amino-acid polypeptide reads, in one-letter code: Phosphatidylserine decarboxylase proenzyme (263 aa).

Residues D90, H146, and S230 each act as charge relay system; for autoendoproteolytic cleavage activity in the active site. Catalysis depends on S230, which acts as the Schiff-base intermediate with substrate; via pyruvic acid; for decarboxylase activity. S230 carries the pyruvic acid (Ser); by autocatalysis modification.

The protein belongs to the phosphatidylserine decarboxylase family. PSD-B subfamily. Prokaryotic type I sub-subfamily. As to quaternary structure, heterodimer of a large membrane-associated beta subunit and a small pyruvoyl-containing alpha subunit. Pyruvate serves as cofactor. Is synthesized initially as an inactive proenzyme. Formation of the active enzyme involves a self-maturation process in which the active site pyruvoyl group is generated from an internal serine residue via an autocatalytic post-translational modification. Two non-identical subunits are generated from the proenzyme in this reaction, and the pyruvate is formed at the N-terminus of the alpha chain, which is derived from the carboxyl end of the proenzyme. The autoendoproteolytic cleavage occurs by a canonical serine protease mechanism, in which the side chain hydroxyl group of the serine supplies its oxygen atom to form the C-terminus of the beta chain, while the remainder of the serine residue undergoes an oxidative deamination to produce ammonia and the pyruvoyl prosthetic group on the alpha chain. During this reaction, the Ser that is part of the protease active site of the proenzyme becomes the pyruvoyl prosthetic group, which constitutes an essential element of the active site of the mature decarboxylase.

Its subcellular location is the cell membrane. The enzyme catalyses a 1,2-diacyl-sn-glycero-3-phospho-L-serine + H(+) = a 1,2-diacyl-sn-glycero-3-phosphoethanolamine + CO2. The protein operates within phospholipid metabolism; phosphatidylethanolamine biosynthesis; phosphatidylethanolamine from CDP-diacylglycerol: step 2/2. In terms of biological role, catalyzes the formation of phosphatidylethanolamine (PtdEtn) from phosphatidylserine (PtdSer). The protein is Phosphatidylserine decarboxylase proenzyme of Bacillus subtilis (strain 168).